Here is a 240-residue protein sequence, read N- to C-terminus: Thiamine-phosphate synthase (240 aa).

Residues 63–67 (QYREK) and asparagine 94 contribute to the 4-amino-2-methyl-5-(diphosphooxymethyl)pyrimidine site. Residues aspartate 95 and aspartate 114 each coordinate Mg(2+). Residue threonine 133 participates in 4-amino-2-methyl-5-(diphosphooxymethyl)pyrimidine binding. 159 to 161 (TFT) is a binding site for 2-[(2R,5Z)-2-carboxy-4-methylthiazol-5(2H)-ylidene]ethyl phosphate. Lysine 162 serves as a coordination point for 4-amino-2-methyl-5-(diphosphooxymethyl)pyrimidine. 2-[(2R,5Z)-2-carboxy-4-methylthiazol-5(2H)-ylidene]ethyl phosphate-binding positions include glycine 190 and 210–211 (IS).

It belongs to the thiamine-phosphate synthase family. Mg(2+) serves as cofactor.

The enzyme catalyses 2-[(2R,5Z)-2-carboxy-4-methylthiazol-5(2H)-ylidene]ethyl phosphate + 4-amino-2-methyl-5-(diphosphooxymethyl)pyrimidine + 2 H(+) = thiamine phosphate + CO2 + diphosphate. It carries out the reaction 2-(2-carboxy-4-methylthiazol-5-yl)ethyl phosphate + 4-amino-2-methyl-5-(diphosphooxymethyl)pyrimidine + 2 H(+) = thiamine phosphate + CO2 + diphosphate. The catalysed reaction is 4-methyl-5-(2-phosphooxyethyl)-thiazole + 4-amino-2-methyl-5-(diphosphooxymethyl)pyrimidine + H(+) = thiamine phosphate + diphosphate. It functions in the pathway cofactor biosynthesis; thiamine diphosphate biosynthesis; thiamine phosphate from 4-amino-2-methyl-5-diphosphomethylpyrimidine and 4-methyl-5-(2-phosphoethyl)-thiazole: step 1/1. Functionally, condenses 4-methyl-5-(beta-hydroxyethyl)thiazole monophosphate (THZ-P) and 2-methyl-4-amino-5-hydroxymethyl pyrimidine pyrophosphate (HMP-PP) to form thiamine monophosphate (TMP). This is Thiamine-phosphate synthase from Methanosarcina mazei (strain ATCC BAA-159 / DSM 3647 / Goe1 / Go1 / JCM 11833 / OCM 88) (Methanosarcina frisia).